An 83-amino-acid chain; its full sequence is Cytochrome b559 subunit alpha (83 aa).

Residues 21-35 (VIHSITVPSLFIAGW) form a helical membrane-spanning segment. His-23 lines the heme pocket.

The protein belongs to the PsbE/PsbF family. As to quaternary structure, heterodimer of an alpha subunit and a beta subunit. PSII is composed of 1 copy each of membrane proteins PsbA, PsbB, PsbC, PsbD, PsbE, PsbF, PsbH, PsbI, PsbJ, PsbK, PsbL, PsbM, PsbT, PsbX, PsbY, PsbZ, Psb30/Ycf12, at least 3 peripheral proteins of the oxygen-evolving complex and a large number of cofactors. It forms dimeric complexes. It depends on heme b as a cofactor.

It is found in the plastid. The protein resides in the chloroplast thylakoid membrane. Its function is as follows. This b-type cytochrome is tightly associated with the reaction center of photosystem II (PSII). PSII is a light-driven water:plastoquinone oxidoreductase that uses light energy to abstract electrons from H(2)O, generating O(2) and a proton gradient subsequently used for ATP formation. It consists of a core antenna complex that captures photons, and an electron transfer chain that converts photonic excitation into a charge separation. The protein is Cytochrome b559 subunit alpha of Oltmannsiellopsis viridis (Marine flagellate).